The primary structure comprises 168 residues: GTP-dependent dephospho-CoA kinase (168 aa).

Residues D49, V50, V51, D68, K70, and E120 each contribute to the GTP site.

The protein belongs to the GTP-dependent DPCK family.

It catalyses the reaction 3'-dephospho-CoA + GTP = GDP + CoA + H(+). It functions in the pathway cofactor biosynthesis; coenzyme A biosynthesis. Functionally, catalyzes the GTP-dependent phosphorylation of the 3'-hydroxyl group of dephosphocoenzyme A to form coenzyme A (CoA). The sequence is that of GTP-dependent dephospho-CoA kinase from Pyrobaculum calidifontis (strain DSM 21063 / JCM 11548 / VA1).